The chain runs to 700 residues: Polyribonucleotide nucleotidyltransferase (700 aa).

The Mg(2+) site is built by Asp484 and Asp490. A KH domain is found at 551-610; that stretch reads PRVIRMVVDPEKIREIIGPGGKTISKIIAETGVKIDIEEDGRLYITASDLRSGERAKQMI. In terms of domain architecture, S1 motif spans 620–688; the sequence is GEIYLGKVLR…KLGRISLSRK (69 aa).

The protein belongs to the polyribonucleotide nucleotidyltransferase family. The cofactor is Mg(2+).

It is found in the cytoplasm. The catalysed reaction is RNA(n+1) + phosphate = RNA(n) + a ribonucleoside 5'-diphosphate. Its function is as follows. Involved in mRNA degradation. Catalyzes the phosphorolysis of single-stranded polyribonucleotides processively in the 3'- to 5'-direction. The chain is Polyribonucleotide nucleotidyltransferase from Thermoanaerobacter sp. (strain X514).